A 358-amino-acid polypeptide reads, in one-letter code: Snurportin-1 (358 aa).

At Met1 the chain carries N-acetylmethionine. 2 disordered regions span residues Met1 to Glu39 and Asp69 to Leu89. The tract at residues Met1 to Leu65 is necessary for interaction with KPNB1 and m3G-cap U1 and U5 snRNP import receptor activity. The segment at Met1–Gly160 is necessary for interaction with XPO1. 2 stretches are compositionally biased toward polar residues: residues Ala7 to Ala22 and Gln30 to Glu39. In terms of domain architecture, IBB spans Ser11–Met73. Ser75 is modified (phosphoserine). An interaction with m3G-cap structure region spans residues Gly128–Arg130. Residues Met210 to Ala329 are necessary for binding to the m3G-cap structure. A compositionally biased stretch (basic and acidic residues) spans Lys315–Ser341. Residues Lys315–Ser358 are disordered. Residues Pro349–Ser358 are compositionally biased toward polar residues. At Ser351 the chain carries Phosphoserine.

It belongs to the snurportin family. As to quaternary structure, component of an import snRNP complex composed of KPNB1, SNUPN, SMN1 and ZNF259. Component of a nuclear export receptor complex composed of KPNB1, Ran, SNUPN and XPO1. Found in a trimeric export complex with SNUPN, Ran and XPO1. Interacts (via IBB domain) with KPNB1; the interaction is direct. Interacts with DDX20, IPO7, SMN1, SNRPB and XPO1. Interacts directly with XPO1. Its interaction with XPO1 and binding to m3G-cap U snRNPs appears to be mutually exclusive. Can form homomers.

Its subcellular location is the nucleus. The protein localises to the cytoplasm. Functions as an U snRNP-specific nuclear import adapter. Involved in the trimethylguanosine (m3G)-cap-dependent nuclear import of U snRNPs. Binds specifically to the terminal m3G-cap U snRNAs. The polypeptide is Snurportin-1 (Snupn) (Rattus norvegicus (Rat)).